The following is a 98-amino-acid chain: Nucleoid-associated protein pc0477 (98 aa).

It belongs to the YbaB/EbfC family. Homodimer.

It is found in the cytoplasm. The protein localises to the nucleoid. Its function is as follows. Binds to DNA and alters its conformation. May be involved in regulation of gene expression, nucleoid organization and DNA protection. This chain is Nucleoid-associated protein pc0477, found in Protochlamydia amoebophila (strain UWE25).